Consider the following 492-residue polypeptide: Protein adenylyltransferase Fic (492 aa).

Positions 1–17 (MCTEAEQPSPPAQQQEQ) are enriched in low complexity. The tract at residues 1–25 (MCTEAEQPSPPAQQQEQGNPPLCKA) is disordered. Residues 33-55 (LYRLVLLFVAGSLAAWTFHALSS) traverse the membrane as a helical segment. TPR repeat units follow at residues 118–151 (ALGA…APRH) and 152–186 (PEVL…SPSN). The short motif at 243–248 (SVGIEG) is the Inhibitory (S/T)XXXE(G/N) motif element. ATP is bound by residues E247 and 328 to 331 (VGGH). In terms of domain architecture, Fido spans 297 to 432 (ITIKDILELH…IRPFVRFIAD (136 aa)). H375 is an active-site residue. ATP contacts are provided by residues 379–386 (DGNGRTSR), 411–412 (YY), and N419.

It belongs to the fic family. In terms of assembly, homodimer.

Its subcellular location is the membrane. It catalyses the reaction L-tyrosyl-[protein] + ATP = O-(5'-adenylyl)-L-tyrosyl-[protein] + diphosphate. It carries out the reaction L-threonyl-[protein] + ATP = 3-O-(5'-adenylyl)-L-threonyl-[protein] + diphosphate. The enzyme catalyses 3-O-(5'-adenylyl)-L-threonyl-[protein] + H2O = L-threonyl-[protein] + AMP + H(+). With respect to regulation, the side chain of Glu-247 determines which of the two opposing activities (AMPylase or de-AMPylase) will take place. In response to endoplasmic reticulum stress, mediates de-AMPylase activity. Adenylyltransferase activity is inhibited by the inhibitory helix present at the N-terminus: Glu-247 binds ATP and competes with ATP-binding at Arg-386, thereby preventing adenylyltransferase activity. In unstressed cells, disengagement of Glu-247 promotes adenylyltransferase activity. Activation dissociates ATP-binding from Glu-247, allowing ordered binding of the entire ATP moiety with the alpha-phosphate in an orientation that is productive for accepting an incoming target hydroxyl side chain. Functionally, protein that can both mediate the addition of adenosine 5'-monophosphate (AMP) to specific residues of target proteins (AMPylation), and the removal of the same modification from target proteins (de-AMPylation), depending on the context. The side chain of Glu-247 determines which of the two opposing activities (AMPylase or de-AMPylase) will take place. Acts as a key regulator of the unfolded protein response (UPR) by mediating AMPylation or de-AMPylation of Hsc70-3/BiP. In unstressed cells, acts as an adenylyltransferase by mediating AMPylation of Hsc70-3/BiP at 'Thr-518', thereby inactivating it. In response to endoplasmic reticulum stress, acts as a phosphodiesterase by mediating removal of ATP (de-AMPylation) from Hsc70-3/BiP at 'Thr-518', leading to restore HSPA5/BiP activity. The polypeptide is Protein adenylyltransferase Fic (Drosophila sechellia (Fruit fly)).